The primary structure comprises 29 residues: Cyclotide mech-3 (29 aa).

The segment at residues 1 to 29 is a cross-link (cyclopeptide (Gly-Asn)); it reads GLPTCGETCTLGKCNTPKCTCNWPICYKN. 3 disulfide bridges follow: C5–C19, C9–C21, and C14–C26.

In terms of processing, this is a cyclic peptide. Contains 3 disulfide bonds.

Probably participates in a plant defense mechanism (Potential). Binds to and induces leakage in phospholipd membranes, particularly ones containing 1-palmitoyl-2-oleophosphatidylethanolamine (POPE). In vitro, displays cytotoxicity against cultured cells but no hemolytic activity towards fresh erythrocytes. This is Cyclotide mech-3 from Melicytus chathamicus (Chatham Island mahoe).